Consider the following 179-residue polypeptide: Large ribosomal subunit protein uL5 (179 aa).

It belongs to the universal ribosomal protein uL5 family. As to quaternary structure, part of the 50S ribosomal subunit; part of the 5S rRNA/L5/L18/L25 subcomplex. Contacts the 5S rRNA and the P site tRNA. Forms a bridge to the 30S subunit in the 70S ribosome.

Functionally, this is one of the proteins that bind and probably mediate the attachment of the 5S RNA into the large ribosomal subunit, where it forms part of the central protuberance. In the 70S ribosome it contacts protein S13 of the 30S subunit (bridge B1b), connecting the 2 subunits; this bridge is implicated in subunit movement. Contacts the P site tRNA; the 5S rRNA and some of its associated proteins might help stabilize positioning of ribosome-bound tRNAs. This Synechococcus elongatus (strain ATCC 33912 / PCC 7942 / FACHB-805) (Anacystis nidulans R2) protein is Large ribosomal subunit protein uL5.